A 272-amino-acid chain; its full sequence is Shikimate dehydrogenase (NADP(+)) (272 aa).

Shikimate contacts are provided by residues Ser14–Ser16 and Thr61. Lys65 serves as the catalytic Proton acceptor. Glu77 contacts NADP(+). Shikimate is bound by residues Asn86 and Asp102. NADP(+)-binding positions include Gly126 to Ala130, Asn149 to Lys154, and Met213. Shikimate is bound at residue Tyr215. Gly237 contributes to the NADP(+) binding site.

The protein belongs to the shikimate dehydrogenase family. In terms of assembly, homodimer.

The catalysed reaction is shikimate + NADP(+) = 3-dehydroshikimate + NADPH + H(+). It functions in the pathway metabolic intermediate biosynthesis; chorismate biosynthesis; chorismate from D-erythrose 4-phosphate and phosphoenolpyruvate: step 4/7. Involved in the biosynthesis of the chorismate, which leads to the biosynthesis of aromatic amino acids. Catalyzes the reversible NADPH linked reduction of 3-dehydroshikimate (DHSA) to yield shikimate (SA). The polypeptide is Shikimate dehydrogenase (NADP(+)) (Erwinia tasmaniensis (strain DSM 17950 / CFBP 7177 / CIP 109463 / NCPPB 4357 / Et1/99)).